The chain runs to 865 residues: Eukaryotic translation initiation factor 3 subunit C (865 aa).

Disordered regions lie at residues methionine 1–lysine 92 and glutamate 206–glycine 243. 2 stretches are compositionally biased toward acidic residues: residues serine 16 to alanine 54 and aspartate 69 to alanine 80. Basic and acidic residues predominate over residues valine 82–lysine 92. Acidic residues predominate over residues alanine 226–glutamate 235. Residues phenylalanine 606 to glutamate 780 form the PCI domain. The disordered stretch occupies residues serine 801 to alanine 865. Residues glutamine 808–phenylalanine 817 are compositionally biased toward polar residues. Over residues glycine 822–phenylalanine 841 the composition is skewed to gly residues.

Belongs to the eIF-3 subunit C family. In terms of assembly, component of the eukaryotic translation initiation factor 3 (eIF-3) complex.

Its subcellular location is the cytoplasm. Component of the eukaryotic translation initiation factor 3 (eIF-3) complex, which is involved in protein synthesis of a specialized repertoire of mRNAs and, together with other initiation factors, stimulates binding of mRNA and methionyl-tRNAi to the 40S ribosome. The eIF-3 complex specifically targets and initiates translation of a subset of mRNAs involved in cell proliferation. The polypeptide is Eukaryotic translation initiation factor 3 subunit C (Pyricularia oryzae (strain 70-15 / ATCC MYA-4617 / FGSC 8958) (Rice blast fungus)).